A 265-amino-acid chain; its full sequence is Methylthioribulose-1-phosphate dehydratase (265 aa).

Cys-116 serves as a coordination point for substrate. Zn(2+) is bound by residues His-134 and His-136. The Proton donor/acceptor role is filled by Glu-159. His-224 contributes to the Zn(2+) binding site.

This sequence belongs to the aldolase class II family. MtnB subfamily. Zn(2+) is required as a cofactor.

The protein localises to the cytoplasm. The catalysed reaction is 5-(methylsulfanyl)-D-ribulose 1-phosphate = 5-methylsulfanyl-2,3-dioxopentyl phosphate + H2O. It functions in the pathway amino-acid biosynthesis; L-methionine biosynthesis via salvage pathway; L-methionine from S-methyl-5-thio-alpha-D-ribose 1-phosphate: step 2/6. Functionally, catalyzes the dehydration of methylthioribulose-1-phosphate (MTRu-1-P) into 2,3-diketo-5-methylthiopentyl-1-phosphate (DK-MTP-1-P). This Debaryomyces hansenii (strain ATCC 36239 / CBS 767 / BCRC 21394 / JCM 1990 / NBRC 0083 / IGC 2968) (Yeast) protein is Methylthioribulose-1-phosphate dehydratase.